The following is an 89-amino-acid chain: MALDAAIKNQIITEYATHEGDTGSPEVQIAVLSRRISDLTEHLKMHKHDHHTRRGLMALVGRRRRMLDYLRRTDIARYRALIERLGLRK.

The protein belongs to the universal ribosomal protein uS15 family. In terms of assembly, part of the 30S ribosomal subunit. Forms a bridge to the 50S subunit in the 70S ribosome, contacting the 23S rRNA.

Functionally, one of the primary rRNA binding proteins, it binds directly to 16S rRNA where it helps nucleate assembly of the platform of the 30S subunit by binding and bridging several RNA helices of the 16S rRNA. In terms of biological role, forms an intersubunit bridge (bridge B4) with the 23S rRNA of the 50S subunit in the ribosome. The sequence is that of Small ribosomal subunit protein uS15 from Kocuria rhizophila (strain ATCC 9341 / DSM 348 / NBRC 103217 / DC2201).